A 177-amino-acid chain; its full sequence is uncharacterized protein (177 aa).

An N-acetyltransferase domain is found at 10–177 (LILRQITDQD…NVYSIVKPRE (168 aa)).

This sequence belongs to the acetyltransferase family.

This is an uncharacterized protein from Bacillus subtilis (strain 168).